A 57-amino-acid polypeptide reads, in one-letter code: Small ribosomal subunit protein bS21 (57 aa).

The segment at 24–57 (SKSGTLQESRKREFYEKPSVKRKKKSEAARKRKF) is disordered. Residues 31–42 (ESRKREFYEKPS) show a composition bias toward basic and acidic residues. Positions 43–57 (VKRKKKSEAARKRKF) are enriched in basic residues.

The protein belongs to the bacterial ribosomal protein bS21 family.

This is Small ribosomal subunit protein bS21 (rpsU) from Listeria innocua serovar 6a (strain ATCC BAA-680 / CLIP 11262).